The primary structure comprises 451 residues: CCAAT/enhancer-binding protein (451 aa).

Disordered regions lie at residues Thr-210–Asp-236, Gln-267–Asn-298, and Leu-328–Arg-389. Composition is skewed to low complexity over residues Glu-218–Ser-228, Ser-268–Asn-298, and Leu-334–Gln-350. Positions Lys-359–Arg-370 are enriched in basic and acidic residues. The 64-residue stretch at Thr-365–Leu-428 folds into the bZIP domain. Residues Arg-369 to Lys-398 form a basic motif region. Residues Leu-400–Leu-407 form a leucine-zipper region.

The protein belongs to the bZIP family. C/EBP subfamily. Binds DNA as a dimer and can form stable heterodimers.

The protein resides in the nucleus. Functionally, may be required for the expression of gene products mediating border cell migration. Among the DNA sequences that this protein binds with high affinity is a conserved site within the promoter of its gene. The protein is CCAAT/enhancer-binding protein (slbo) of Drosophila virilis (Fruit fly).